Consider the following 288-residue polypeptide: Urease accessory protein UreD 1 (288 aa).

A compositionally biased stretch (pro residues) spans 1–10 (MHGPLAPAPS). Residues 1 to 35 (MHGPLAPAPSPERLGAAPARQRSDGRIRLRVGPAR) are disordered.

The protein belongs to the UreD family. UreD, UreF and UreG form a complex that acts as a GTP-hydrolysis-dependent molecular chaperone, activating the urease apoprotein by helping to assemble the nickel containing metallocenter of UreC. The UreE protein probably delivers the nickel.

The protein resides in the cytoplasm. Its function is as follows. Required for maturation of urease via the functional incorporation of the urease nickel metallocenter. This is Urease accessory protein UreD 1 from Methylobacterium radiotolerans (strain ATCC 27329 / DSM 1819 / JCM 2831 / NBRC 15690 / NCIMB 10815 / 0-1).